We begin with the raw amino-acid sequence, 463 residues long: Putative protein FAM90A2P (463 aa).

Disordered regions lie at residues 1-42 (MTAR…DPRL), 67-115 (ALVP…PQRK), 150-295 (MPVH…PAQA), and 326-365 (ALENLQPPPAATELGPSTSPQMGRRTPAQVPGVDRQPPHS). 3 stretches are compositionally biased toward basic and acidic residues: residues 74-83 (GKKEGKENLK), 97-114 (NKDKGEKEERPRQQDPQR), and 159-170 (PCVDPELADRSA). Residues 180 to 198 (LASLSPLRKASLRSSSSLG) show a composition bias toward low complexity.

This sequence belongs to the FAM90 family.

This Homo sapiens (Human) protein is Putative protein FAM90A2P (FAM90A2P).